A 429-amino-acid chain; its full sequence is MRGPELGPETSMEGDVLDTLEALGYKGPLLEEQALSKAAEGGLSSPEFSELCIWLGSQIKSLCNLEESITSAGRDDLESFQLEISGFLKEMACPYSVLVSGDIKERLTKKDDCLKLLLFLSTELQALQILQKKKHKNSQLDKNSEICQEVQAVCDALGVPKSDTSDIPLLLSQVESKVKDILCRVQKNHVGKPLLKVDLSSEQAEKLERINDALSCEYECRRRMLMKRLDVTVQSFGWSDRAKAKTDNIARIYQPKRYALSPKTTVTLAHLLAAREDLSKIIRTSSGISREKTACAINKVLMGRVPDRGGRPNEIEPPPPEMPPWQKRQEGGGRGGWGGGGGGRGGGGGGRGGWGGGGGWGGGGGSGGGWGGSGGGGGGRGGFQGRGDYGGRGDYGGRGGYGGRGGYGGRGYGDPYGGGGGGGGGYRRY.

The interval 304 to 429 is disordered; that stretch reads RVPDRGGRPN…GGGGGGYRRY (126 aa). Residues 305 to 314 are compositionally biased toward basic and acidic residues; sequence VPDRGGRPNE. Residues 332-429 are compositionally biased toward gly residues; the sequence is GGRGGWGGGG…GGGGGGYRRY (98 aa).

Belongs to the FAM98 family. As to quaternary structure, homodimer. Component of a tRNA-splicing ligase complex. Interacts with FAM98A.

Its subcellular location is the nucleus. The protein resides in the cytoplasm. Positively stimulates PRMT1-induced protein arginine dimethylated arginine methylation. In Mus musculus (Mouse), this protein is Protein FAM98B (Fam98b).